A 233-amino-acid chain; its full sequence is Large ribosomal subunit protein uL22m (233 aa).

This sequence belongs to the universal ribosomal protein uL22 family. As to quaternary structure, component of the mitochondrial ribosome large subunit (39S) which comprises a 16S rRNA and about 50 distinct proteins.

The protein localises to the mitochondrion. The sequence is that of Large ribosomal subunit protein uL22m (mRpL22) from Drosophila pseudoobscura pseudoobscura (Fruit fly).